The primary structure comprises 203 residues: MRGTLYIVAAPSGAGKSSIVNATLARDPKIALSISFTSRAPRPGERHAEHYHFVSAEEFQGMIEAGDFFEYALVHGDWKGTARQSVEPQLAAGHDVLLEIDWQGARQVRQKVPDAVSVFILPPSRQALDERMRKRGQDSEDVMAQRLAAAREEMLHFEEFDYVIINETFDTAVSEMCAIFTASRLRRQAQQQRHAGLIQALLD.

The Guanylate kinase-like domain maps to 3–181; that stretch reads GTLYIVAAPS…AVSEMCAIFT (179 aa). An ATP-binding site is contributed by 10 to 17; the sequence is APSGAGKS.

It belongs to the guanylate kinase family.

It is found in the cytoplasm. It carries out the reaction GMP + ATP = GDP + ADP. Essential for recycling GMP and indirectly, cGMP. This Xanthomonas campestris pv. campestris (strain 8004) protein is Guanylate kinase.